Here is a 969-residue protein sequence, read N- to C-terminus: RNA polymerase-associated protein RapA (969 aa).

Positions 164-334 constitute a Helicase ATP-binding domain; it reads EVGRRYAPRV…FARLRLLDPD (171 aa). Position 177–184 (177–184) interacts with ATP; sequence DEVGLGKT. Positions 280–283 match the DEAH box motif; that stretch reads DEAH. Residues 492–672 enclose the Helicase C-terminal domain; it reads RVNWLLELLK…GLEPLIEESA (181 aa).

The protein belongs to the SNF2/RAD54 helicase family. RapA subfamily. Interacts with the RNAP. Has a higher affinity for the core RNAP than for the holoenzyme. Its ATPase activity is stimulated by binding to RNAP.

Functionally, transcription regulator that activates transcription by stimulating RNA polymerase (RNAP) recycling in case of stress conditions such as supercoiled DNA or high salt concentrations. Probably acts by releasing the RNAP, when it is trapped or immobilized on tightly supercoiled DNA. Does not activate transcription on linear DNA. Probably not involved in DNA repair. The sequence is that of RNA polymerase-associated protein RapA from Aliivibrio salmonicida (strain LFI1238) (Vibrio salmonicida (strain LFI1238)).